A 324-amino-acid chain; its full sequence is Meiotic recombination protein DLH1 (324 aa).

112-119 contacts ATP; it reads GEFRCGKT. A dsDNA-binding site is contributed by Arg214. Positions 214, 217, 220, 226, and 296 each coordinate ssDNA. Residues Arg220 and Arg226 each coordinate dsDNA.

The protein belongs to the RecA family. DMC1 subfamily. As to quaternary structure, double stacked ring-shaped homooctamer.

The protein localises to the nucleus. In terms of biological role, required for meiotic recombination, synaptonemal complex formation and cell cycle progression. The protein is Meiotic recombination protein DLH1 (DLH1) of Candida albicans (Yeast).